The following is a 628-amino-acid chain: MESKTYYLDKISNNLGYPVYFLFDEIHVIENTNNNIKEIIQVEPDYSKPDLKFTEYRNGFFATNYIIEVAKVPLLDVTTIEKLLQYCSSFKLYKRFFENNRLDLCDYLITKDIKLTRRSDKFILNRIKKLDKDSLMYIINHNDFFQIRWEVIFKFVVSNITNISSDTNNEIIDYLMTLINNFDYKIDYDEIIKHIMIDPRTLKIKNIELFAELVDINYMDILKQACFFGSTEIINYVLNKGIEYDFYELIKSDISITALKFFIDKGHYIDDTTINILVNPESKNINRLIRSLINQKILTQDLITKQLLETIIKTDIHSIEYLINDFDIINMVDLDEIMIEALRYNFTELIDWCINNGSDINRHMSFIMKECCPEIVSKFIELGAQVPNDVSCYNPELIEIYCMYDDCIPYLKTIIEKEFDTAENIIHNIIENRPHIQVLKYLLSEITNHDLTIPKLANMFIHDYCYCSSENYGDLISLNIQFNIEQQIIIQIIEGNFINAKELIFTNYDCYNNLKILFVTMMSNNIDMLEFLLEINNYDQDYLQWVLIFSSRNVTMLEYIINNTNIDPNLFKQEMSTFSSHFKSYSVDYLKLNDYYEGTSILINSRLDIFMKNIGINIFKSYDNQRRL.

4 ANK repeats span residues 217–246 (NYMDILKQACFFGSTEIINYVLNKGIEYDF), 333–362 (DLDEIMIEALRYNFTELIDWCINNGSDINR), 421–451 (TAENIIHNIIENRPHIQVLKYLLSEITNHDL), and 512–542 (NNLKILFVTMMSNNIDMLEFLLEINNYDQDY).

This is Putative ankyrin repeat protein L769 from Acanthamoeba polyphaga mimivirus (APMV).